Consider the following 423-residue polypeptide: TNF receptor-associated factor family protein DDB_G0277243 (423 aa).

The RING-type; degenerate zinc-finger motif lies at 20 to 66 (CSICVDPVLNSLPLEQHQALSCKNGHLLCQACWGKQLALRKECCICK). 2 consecutive TRAF-type zinc fingers follow at residues 124–179 (SHLR…NDMP) and 180–237 (THIE…CYLS). An MATH domain is found at 287-411 (RYKGNWTIEN…DGKLTINIDV (125 aa)).

This sequence belongs to the TNF receptor-associated factor family. A subfamily.

The protein resides in the cytoplasm. In terms of biological role, probable adapter protein and signal transducer that links members of the tumor necrosis factor receptor family to different signaling pathways by association with the receptor cytoplasmic domain and kinases. This chain is TNF receptor-associated factor family protein DDB_G0277243, found in Dictyostelium discoideum (Social amoeba).